The primary structure comprises 427 residues: MASDQRDTDFSAESPDLEEDGGGGGGGRGGGETESDEDVVIPEPNEAEDDDHDPDPDPEYEDLNSPSMISRAPATKSSSGTVTVALPAGSAVPVASIPSDSDQKWHRMTEIVHQRPPIDDSRRLFQRLWTDEDEIELLRGFLDYITNHRGNSSHPPDTAPFYEQIKSKLQLEFNKNQLVEKLRRLKKKYRNVMSKFSSGKEVFFKSPHDQATFDISRKIWNQTGKIIGFEDNNVMDLEETNHVNNANGSSGFNVSVIGNANVDVDSENGLEKKVTISRKRSRSRIGKIDEDKPVLAPCDGVIPNAVNLNENVAVGCDFGDGRNLGVLIEETVKNCVSPMIKEMMNSTTGMMMAATGGFPGGGAHALGVLSPMLMPSMNLGFGGKGVGDERWRRQQILELEVYSRRLELVQEQIRATVNELKTMPNGG.

The disordered stretch occupies residues 1–81 (MASDQRDTDF…APATKSSSGT (81 aa)). Ser-14 is subject to Phosphoserine. Over residues 22-32 (GGGGGGRGGGE) the composition is skewed to gly residues. A compositionally biased stretch (acidic residues) spans 33–62 (TESDEDVVIPEPNEAEDDDHDPDPDPEYED).

The protein belongs to the GeBP family.

The chain is Probable transcription factor At5g28040 from Arabidopsis thaliana (Mouse-ear cress).